The chain runs to 315 residues: uncharacterized protein (315 aa).

A run of 3 helical transmembrane segments spans residues Ile-19–Phe-39, Thr-56–Phe-76, and Pro-81–Ile-101. Positions Glu-154–Gln-171 are enriched in polar residues. The segment at Glu-154–Asp-214 is disordered. The span at Gly-203–Asp-214 shows a compositional bias: basic and acidic residues.

It belongs to the ATPase C chain family.

The protein localises to the mitochondrion membrane. This is an uncharacterized protein from Arabidopsis thaliana (Mouse-ear cress).